The sequence spans 599 residues: MQTVNVDIAIVGAGGGGLRAAIAAAEANPNLKIALVSKVYPMRTHTVAAEGGAAAVIKEEDSYDKHFQDTVAGGDWLCEQDVVEYFVQHSPVEMTQLERWGCPWSRKADGDVNVRRFGGMKIERTWFAADKTGFHLLHTLFQTSIQYPQIQRFDEHFVLDILVDDGHARGMVAMNMMEGSLVQINANAVVIATGGGCRAFKFNTNGGIVTGDGLSMAYRHGVPLRDMEFVQYHPTGLPNTGILMTEGCRGEGGILVNKDGYRYLQDYGLGPETPIGKPQNKYMELGPRDKVSQAFWQEWKKGNTLKTAKGVDVVHLDLRHLGEKYLHERLPFICELASAYEGVNPVNEPIPVRPVVHYTMGGIEVDFNSETRIKGLFAVGECASSGLHGANRLGSNSLAELVVLGRVAGEYAAQRAVEAQSVNQSAVDAQAKDVVARLEALHKQEGNESWSEIRDEMGTVMEEGCGIYRDQASMQKAVDKIAELKERYKRIRVSDNSSVFNTDVLYTVELGYILDVAQSIANSAIERKESRGAHQRLDYTERDDVNYLKHTLAFYNENGAPRIEYSPVKITKSQPAKRVYGAEAEAQEAAAKAKEQANG.

Residues G12 to G16, V36 to K38, T44 to G52, H156 to V158, and D212 contribute to the FAD site. H45 carries the post-translational modification Tele-8alpha-FAD histidine. Active-site residues include H233 and R249. Residues H357–Y358, E381, and R392–L398 contribute to the FAD site.

The protein belongs to the FAD-dependent oxidoreductase 2 family. FRD/SDH subfamily. Part of an enzyme complex containing four subunits: a flavoprotein (FrdA), an iron-sulfur protein (FrdB), and two hydrophobic anchor proteins (FrdC and FrdD). Requires FAD as cofactor.

It is found in the cell inner membrane. The catalysed reaction is a quinone + succinate = fumarate + a quinol. The enzyme catalyses a menaquinone + succinate = a menaquinol + fumarate. In Haemophilus influenzae (strain ATCC 51907 / DSM 11121 / KW20 / Rd), this protein is Fumarate reductase flavoprotein subunit (frdA).